The chain runs to 314 residues: MSEELSFSAMVKAELALLTPELPCCRRMELAGLVRALGRLELSGRGRFALTLSTDSAPVSRKVIRLLKSVSPVRYEVMVMRRRKLRKNLVYRVHIPHQPGVAELLQLAGFIDEAGRPADWVEPPELANDHCRRAFLRGTFLGSGWVAGPEKQHHLEITTTATEAADALGQMLFRGGIAARMVARRESLVLYIKEADQIIRFLGLVGAHQALLRYEEVRVIKEMKNQVNRQVNAEVANMTKQADAAARQVEAIKRLEAAGALERVSPPLRELAGLRLAYPDASLKELGELCRPPVSKSGAAHRMRQLMALAESLE.

A DNA-binding region (H-T-H motif) is located at residues S282 to E314.

This sequence belongs to the WhiA family.

Functionally, involved in cell division and chromosome segregation. The polypeptide is Probable cell division protein WhiA (Symbiobacterium thermophilum (strain DSM 24528 / JCM 14929 / IAM 14863 / T)).